Consider the following 356-residue polypeptide: Protein HEXIM1 (356 aa).

Basic and acidic residues-rich tracts occupy residues 1–11 and 24–47; these read MAEPLLSEHQH and VHEEQNSERPPSAEERVPKEDSRW. The interval 1–160 is disordered; that stretch reads MAEPLLSEHQ…RRRPSKKKRH (160 aa). Residues 48–58 are compositionally biased toward polar residues; it reads QSRASLQSGSR. A compositionally biased stretch (basic and acidic residues) spans 84–93; that stretch reads CLEKGEKGQN. Residues Ser98 and Ser103 each carry the phosphoserine modification. Residues 145–160 are compositionally biased toward basic residues; it reads LGKKKHRRRPSKKKRH. Residues 147–174 form a basic region; mediates nuclear localization and interaction with 7SK snRNA and NR3C1 region; it reads KKKHRRRPSKKKRHWKPYYKLTWEEKKK. An interaction with P-TEFb region spans residues 199-202; that stretch reads PYNT. Residues 207 to 247 form an autoinhibitory acidic region; in absence of 7SK snRNA interacts with the basic region preventing interaction with P-TEFb and modulating subcellular localization region; sequence MDDHDQEEPDLKTGLYPKRAAAKSDDTSDEDFVEEAGEEDG. The disordered stretch occupies residues 209–259; the sequence is DHDQEEPDLKTGLYPKRAAAKSDDTSDEDFVEEAGEEDGGSDGMGGDGSEF. Ser230 is subject to Phosphoserine. Thr233 is subject to Phosphothreonine. Positions 233–248 are enriched in acidic residues; the sequence is TSDEDFVEEAGEEDGG. 3 positions are modified to phosphoserine: Ser234, Ser249, and Ser257. Residues 280-346 adopt a coiled-coil conformation; that stretch reads SKQELIKEYL…LTENELHRQQ (67 aa). Positions 283 to 311 are mediates interaction with CCNT1; it reads ELIKEYLELEKCLSRKEDENNRLRLESKR. The segment at 307–352 is required for inhibition of ESR1-dependent transcription; the sequence is LESKRLGGVDARVRELELELDRLRAENRQLLTENELHRQQERAPPS. The disordered stretch occupies residues 337–356; that stretch reads LTENELHRQQERAPPSKFGD.

It belongs to the HEXIM family. In terms of assembly, homooligomer and heterooligomer with HEXIM2; probably dimeric. Core component of the 7SK RNP complex, at least composed of 7SK RNA, LARP7, MEPCE, HEXIM1 (or HEXIM2) and P-TEFb (composed of CDK9 and CCNT1/cyclin-T1). Interacts with the N-CoR complex through NCOR1. Interacts with ESR1 and NR3C1. May interact with NF-kappa-B through RELA. Interacts with CCNT2; mediates formation of a tripartite complex with KPNA2. Part of the HDP-RNP complex composed of at least HEXIM1, PRKDC, XRCC5, XRCC6, paraspeckle proteins (SFPQ, NONO, PSPC1, RBM14, and MATR3) and NEAT1 non-coding RNA.

It is found in the nucleus. The protein localises to the cytoplasm. Its function is as follows. Transcriptional regulator which functions as a general RNA polymerase II transcription inhibitor. Core component of the 7SK RNP complex: in cooperation with 7SK snRNA sequesters P-TEFb in a large inactive 7SK snRNP complex preventing RNA polymerase II phosphorylation and subsequent transcriptional elongation. May also regulate NF-kappa-B, ESR1, NR3C1 and CIITA-dependent transcriptional activity. Plays a role in the regulation of DNA virus-mediated innate immune response by assembling into the HDP-RNP complex, a complex that serves as a platform for IRF3 phosphorylation and subsequent innate immune response activation through the cGAS-STING pathway. This is Protein HEXIM1 (Hexim1) from Rattus norvegicus (Rat).